A 429-amino-acid chain; its full sequence is Enolase (429 aa).

A (2R)-2-phosphoglycerate-binding site is contributed by Gln163. Glu205 (proton donor) is an active-site residue. Mg(2+) is bound by residues Asp242, Glu287, and Asp314. The (2R)-2-phosphoglycerate site is built by Lys339, Arg368, Ser369, and Lys390. The Proton acceptor role is filled by Lys339.

It belongs to the enolase family. Requires Mg(2+) as cofactor.

The protein resides in the cytoplasm. It localises to the secreted. Its subcellular location is the cell surface. The catalysed reaction is (2R)-2-phosphoglycerate = phosphoenolpyruvate + H2O. The protein operates within carbohydrate degradation; glycolysis; pyruvate from D-glyceraldehyde 3-phosphate: step 4/5. Its function is as follows. Catalyzes the reversible conversion of 2-phosphoglycerate (2-PG) into phosphoenolpyruvate (PEP). It is essential for the degradation of carbohydrates via glycolysis. This Anaeromyxobacter dehalogenans (strain 2CP-1 / ATCC BAA-258) protein is Enolase.